Here is a 515-residue protein sequence, read N- to C-terminus: Putative ribose/galactose/methyl galactoside import ATP-binding protein (515 aa).

ABC transporter domains lie at 26–262 (LEVA…VGRE) and 272–511 (VALG…KIMD). 58–65 (GENGAGKS) contributes to the ATP binding site.

The protein belongs to the ABC transporter superfamily. Carbohydrate importer 2 (CUT2) (TC 3.A.1.2) family.

The protein resides in the cell inner membrane. The enzyme catalyses D-ribose(out) + ATP + H2O = D-ribose(in) + ADP + phosphate + H(+). The catalysed reaction is D-galactose(out) + ATP + H2O = D-galactose(in) + ADP + phosphate + H(+). Part of an ABC transporter complex involved in carbohydrate import. Could be involved in ribose, galactose and/or methyl galactoside import. Responsible for energy coupling to the transport system. The sequence is that of Putative ribose/galactose/methyl galactoside import ATP-binding protein from Hahella chejuensis (strain KCTC 2396).